The following is a 742-amino-acid chain: Conidiogenone synthase (742 aa).

The interval 1 to 332 (MGETIADVYA…SLCVPRYFKV (332 aa)) is terpene cyclase. Asp-97 is a binding site for Mg(2+). Substrate is bound by residues Asp-97, 190–193 (RIVD), Asn-234, 238–242 (SWDKE), and 328–329 (RY). Residues 97–101 (DDETD) carry the DDXXD 1 motif. Residues 234–242 (NDLFSWDKE) carry the NSE/DTE motif. Positions 333–742 (ERNPYKDHLE…LRAMEEASQK (410 aa)) are prenyltransferase. Lys-414, Arg-417, and His-446 together coordinate isopentenyl diphosphate. Mg(2+)-binding residues include Asp-453 and Asp-457. The DDXXD 2 motif lies at 453–457 (DDIQD). Arg-462 contributes to the dimethylallyl diphosphate binding site. Arg-463 provides a ligand contact to isopentenyl diphosphate. Residues Lys-539, Thr-540, Gln-575, Asn-582, Lys-592, and Lys-602 each contribute to the dimethylallyl diphosphate site. Residues 701 to 724 (EAHKSDSAWKVNQRRAWKGSQKNG) are disordered.

This sequence in the N-terminal section; belongs to the terpene synthase family. In the C-terminal section; belongs to the FPP/GGPP synthase family. As to quaternary structure, hexamer. Mg(2+) serves as cofactor.

It catalyses the reaction isopentenyl diphosphate + (2E,6E)-farnesyl diphosphate = (2E,6E,10E)-geranylgeranyl diphosphate + diphosphate. Its pathway is secondary metabolite biosynthesis; terpenoid biosynthesis. Functionally, bifunctional terpene synthase; part of the gene cluster that mediates the biosynthesis of conidiogenone, a diterpene known to induce the conidiation. The bifunctional terpene synthase PrDS converts isopentenyl diphosphate (IPP) and dimethylallyl diphosphate (DMAPP) into deoxyconidiogenol. The C-terminal prenyltransferase (PT) domain of PrDS catalyzes formation of GGPP, whereas the N-terminal terpene cyclase (TC) domain catalyzes the cyclization of GGPP into deoxyconidiogenol. The cytochrome P450 monooxygenase PrP450 then catalyzes two rounds of oxidation to furnish conidiogenone. This is Conidiogenone synthase from Penicillium roqueforti (strain FM164).